The sequence spans 448 residues: Chromosomal replication initiator protein DnaA (448 aa).

Positions 1 to 72 (MPDLQELWNY…VEGAYEFAEI (72 aa)) are domain I, interacts with DnaA modulators. A domain II region spans residues 72–110 (IELTPIFVLPGESDNLTPLEPEEEHVLTKAETPTFLRET). Residues 111–327 (HLNSKYTFDT…GALVRVQAYA (217 aa)) are domain III, AAA+ region. ATP contacts are provided by Gly-155, Gly-157, Lys-158, and Thr-159. The domain IV, binds dsDNA stretch occupies residues 328–448 (TMQNAEITTS…ILDLKNTMKS (121 aa)).

It belongs to the DnaA family. In terms of assembly, oligomerizes as a right-handed, spiral filament on DNA at oriC.

It is found in the cytoplasm. Functionally, plays an essential role in the initiation and regulation of chromosomal replication. ATP-DnaA binds to the origin of replication (oriC) to initiate formation of the DNA replication initiation complex once per cell cycle. Binds the DnaA box (a 9 base pair repeat at the origin) and separates the double-stranded (ds)DNA. Forms a right-handed helical filament on oriC DNA; dsDNA binds to the exterior of the filament while single-stranded (ss)DNA is stabiized in the filament's interior. The ATP-DnaA-oriC complex binds and stabilizes one strand of the AT-rich DNA unwinding element (DUE), permitting loading of DNA polymerase. After initiation quickly degrades to an ADP-DnaA complex that is not apt for DNA replication. Binds acidic phospholipids. In Latilactobacillus sakei subsp. sakei (strain 23K) (Lactobacillus sakei subsp. sakei), this protein is Chromosomal replication initiator protein DnaA.